The sequence spans 425 residues: Protein-glutamate methylesterase/protein-glutamine glutaminase (425 aa).

Residues 22-140 (RVMVVDDSVV…EVAAADIFRH (119 aa)) enclose the Response regulatory domain. Asp73 bears the 4-aspartylphosphate mark. Disordered regions lie at residues 150–174 (AAKRRRPATVASPPPDHDDYGSNAS) and 203–223 (VQREQQPRSAQAARAMSRPQP). Positions 221-417 (PQPTLRSFSA…PLQQIAPKLV (197 aa)) constitute a CheB-type methylesterase domain. Catalysis depends on residues Ser241, His269, and Asp365.

Belongs to the CheB family. Post-translationally, phosphorylated by CheA. Phosphorylation of the N-terminal regulatory domain activates the methylesterase activity.

It is found in the cytoplasm. It carries out the reaction [protein]-L-glutamate 5-O-methyl ester + H2O = L-glutamyl-[protein] + methanol + H(+). It catalyses the reaction L-glutaminyl-[protein] + H2O = L-glutamyl-[protein] + NH4(+). In terms of biological role, involved in chemotaxis. Part of a chemotaxis signal transduction system that modulates chemotaxis in response to various stimuli. Catalyzes the demethylation of specific methylglutamate residues introduced into the chemoreceptors (methyl-accepting chemotaxis proteins or MCP) by CheR. Also mediates the irreversible deamidation of specific glutamine residues to glutamic acid. The sequence is that of Protein-glutamate methylesterase/protein-glutamine glutaminase from Nitrobacter winogradskyi (strain ATCC 25391 / DSM 10237 / CIP 104748 / NCIMB 11846 / Nb-255).